The primary structure comprises 427 residues: Glutamyl-tRNA(Gln) amidotransferase subunit D (427 aa).

Residues 1 to 18 are compositionally biased toward basic and acidic residues; sequence MTADPGDRVRVTHGDASH. A disordered region spans residues 1–20; the sequence is MTADPGDRVRVTHGDASHEG. The region spanning 80–413 is the Asparaginase/glutaminase domain; sequence PTIALISTGG…DDPEAAMQES (334 aa). Active-site residues include T90, T166, D167, and K243.

It belongs to the asparaginase 1 family. GatD subfamily. In terms of assembly, heterodimer of GatD and GatE.

The enzyme catalyses L-glutamyl-tRNA(Gln) + L-glutamine + ATP + H2O = L-glutaminyl-tRNA(Gln) + L-glutamate + ADP + phosphate + H(+). Functionally, allows the formation of correctly charged Gln-tRNA(Gln) through the transamidation of misacylated Glu-tRNA(Gln) in organisms which lack glutaminyl-tRNA synthetase. The reaction takes place in the presence of glutamine and ATP through an activated gamma-phospho-Glu-tRNA(Gln). The GatDE system is specific for glutamate and does not act on aspartate. The protein is Glutamyl-tRNA(Gln) amidotransferase subunit D of Halobacterium salinarum (strain ATCC 29341 / DSM 671 / R1).